The following is a 718-amino-acid chain: Mitotic spindle assembly checkpoint protein MAD1 (718 aa).

An N-acetylmethionine modification is found at Met-1. Ser-16 carries the post-translational modification Phosphoserine. A coiled-coil region spans residues 46-632 (QQSMQLEERA…QTKIQEFRKA (587 aa)). Lys-61 is subject to N6-acetyllysine; alternate. Lys-61 participates in a covalent cross-link: Glycyl lysine isopeptide (Lys-Gly) (interchain with G-Cter in SUMO2); alternate. The short motif at 79–82 (KRAR) is the Nuclear localization signal element. At Ser-214 the chain carries Phosphoserine. The interval 301–340 (VGLELENERLLAKLQSWERLDQTMGLSIRTPEDLSRFVVE) is important for interaction with IK. The segment at 380–532 (LLEERKKRET…EAQLERRALQ (153 aa)) is necessary for interaction with NEK2. Ser-428 carries the phosphoserine modification. The segment at 439–480 (EDMVQKVHSHSAEMEAQLSQALEELGGQKQRADMLEMELKML) is important for interaction with IK. The segment at 540 to 551 (TKVLHMSLNPTS) is necessary for interaction with MAD2L1. 2 positions are modified to phosphoserine: Ser-598 and Ser-610. The residue at position 634 (Tyr-634) is a Phosphotyrosine. Phosphothreonine is present on Thr-716.

The protein belongs to the MAD1 family. Homodimer. Dimerizes via its N- and C- terminal regions. Heterodimerizes with MAD2L1 in order to form a tetrameric MAD1L1-MAD2L1 core complex. Interacts with the closed conformation form of MAD2L1 (C-MAD2) and open conformation form of MAD2L1 (O-MAD2). It is unclear whether MAD1L1 dimerization promotes the conversion of closed to open conformation of MAD2L1. Formation of a heterotetrameric core complex containing two molecules each of MAD1L1 and of MAD2L1 promotes binding of another molecule of MAD2L1 to each MAD2L1, resulting in a heterohexamer. Perturbation of the original MAD1L1-MAD2L1 structure by the spindle checkpoint may decrease MAD2L1 affinity for MAD1L1. CDC20 can compete with MAD1L1 for MAD2L1 binding, until the attachment and/or tension dampen the checkpoint signal, preventing further release of MAD2L1 on to CDC20. Also able to interact with the BUB1/BUB3 complex. Interacts with NEK2. Interacts with TTK. Interacts with TPR; the interactions occurs in a microtubule-independent manner. Interacts with IK. Interacts with the viral Tax protein. Interacts with PRAP1. In terms of assembly, interacts with MAD2L1; this interaction leads to the cytoplasmic sequestration of MAD2L1. Interacts with PRAP1. In terms of processing, phosphorylated; by BUB1. Become hyperphosphorylated in late S through M phases or after mitotic spindle damage. Phosphorylated; by TTK. As to expression, expressed in hepatocellular carcinomas and hepatoma cell lines (at protein level).

The protein resides in the nucleus. It is found in the chromosome. Its subcellular location is the centromere. The protein localises to the kinetochore. It localises to the nucleus envelope. The protein resides in the cytoplasm. It is found in the cytoskeleton. Its subcellular location is the microtubule organizing center. The protein localises to the centrosome. It localises to the spindle. The protein resides in the spindle pole. Its function is as follows. Component of the spindle-assembly checkpoint that prevents the onset of anaphase until all chromosomes are properly aligned at the metaphase plate. Forms a heterotetrameric complex with the closed conformation form of MAD2L1 (C-MAD2) at unattached kinetochores during prometaphase, recruits an open conformation of MAD2L1 (O-MAD2) and promotes the conversion of O-MAD2 to C-MAD2, which ensures mitotic checkpoint signaling. Functionally, sequesters MAD2L1 in the cytoplasm preventing its function as an activator of the mitotic spindle assembly checkpoint (SAC) resulting in SAC impairment and chromosomal instability in hepatocellular carcinomas. The polypeptide is Mitotic spindle assembly checkpoint protein MAD1 (MAD1L1) (Homo sapiens (Human)).